A 503-amino-acid chain; its full sequence is Aromatase (503 aa).

3 helical membrane-spanning segments follow: residues 19 to 39 (EVAP…LLVW), 51 to 71 (GYFL…MGIG), and 303 to 323 (MLIA…FLIA). 2 residues coordinate substrate: D309 and M374. A heme-binding site is contributed by C437.

The protein belongs to the cytochrome P450 family. Requires heme as cofactor.

Its subcellular location is the endoplasmic reticulum membrane. The protein resides in the microsome membrane. The enzyme catalyses testosterone + 3 reduced [NADPH--hemoprotein reductase] + 3 O2 = 17beta-estradiol + formate + 3 oxidized [NADPH--hemoprotein reductase] + 4 H2O + 4 H(+). It catalyses the reaction androst-4-ene-3,17-dione + 3 reduced [NADPH--hemoprotein reductase] + 3 O2 = estrone + formate + 3 oxidized [NADPH--hemoprotein reductase] + 4 H2O + 4 H(+). The catalysed reaction is androst-4-ene-3,17-dione + reduced [NADPH--hemoprotein reductase] + O2 = 19-hydroxyandrost-4-ene-3,17-dione + oxidized [NADPH--hemoprotein reductase] + H2O + H(+). It carries out the reaction 19-hydroxyandrost-4-ene-3,17-dione + reduced [NADPH--hemoprotein reductase] + O2 = 19-oxo-androst-4-ene-3,17-dione + oxidized [NADPH--hemoprotein reductase] + 2 H2O + H(+). The enzyme catalyses 19-oxo-androst-4-ene-3,17-dione + reduced [NADPH--hemoprotein reductase] + O2 = estrone + formate + oxidized [NADPH--hemoprotein reductase] + H2O + 2 H(+). It catalyses the reaction estrone + reduced [NADPH--hemoprotein reductase] + O2 = 2-hydroxyestrone + oxidized [NADPH--hemoprotein reductase] + H2O + H(+). The catalysed reaction is 17beta-hydroxy-5alpha-androstan-3-one + reduced [NADPH--hemoprotein reductase] + O2 = 17beta,19-dihydroxy-3-oxo-5alpha-androstanone + oxidized [NADPH--hemoprotein reductase] + H2O + H(+). It carries out the reaction 17beta,19-dihydroxy-3-oxo-5alpha-androstanone + reduced [NADPH--hemoprotein reductase] + O2 = 17beta-hydroxy-3,19-dioxo-5alpha-androstanone + oxidized [NADPH--hemoprotein reductase] + 2 H2O + H(+). The enzyme catalyses 17beta-hydroxy-3,19-dioxo-5alpha-androstanone + reduced [NADPH--hemoprotein reductase] + O2 = 17beta-hydroxy-3-oxo-19-nor-5alpha-androst-1-ene + formate + oxidized [NADPH--hemoprotein reductase] + H2O + 2 H(+). Its pathway is steroid hormone biosynthesis. A cytochrome P450 monooxygenase that catalyzes the conversion of C19 androgens, androst-4-ene-3,17-dione (androstenedione) and testosterone to the C18 estrogens, estrone and estradiol, respectively. Catalyzes three successive oxidations of C19 androgens: two conventional oxidations at C19 yielding 19-hydroxy and 19-oxo/19-aldehyde derivatives, followed by a third oxidative aromatization step that involves C1-beta hydrogen abstraction combined with cleavage of the C10-C19 bond to yield a phenolic A ring and formic acid. Alternatively, the third oxidative reaction yields a 19-norsteroid and formic acid. Converts dihydrotestosterone to delta1,10-dehydro 19-nordihydrotestosterone and may play a role in homeostasis of this potent androgen. Also displays 2-hydroxylase activity toward estrone. Mechanistically, uses molecular oxygen inserting one oxygen atom into a substrate, and reducing the second into a water molecule, with two electrons provided by NADPH via cytochrome P450 reductase (CPR; NADPH-ferrihemoprotein reductase). The polypeptide is Aromatase (CYP19A1) (Leucopleurus acutus (Atlantic white-sided dolphin)).